The following is a 635-amino-acid chain: 1-deoxy-D-xylulose-5-phosphate synthase (635 aa).

Residues His78 and 119 to 121 (GHS) each bind thiamine diphosphate. Mg(2+) is bound at residue Asp151. Thiamine diphosphate contacts are provided by residues 152-153 (GA), Asn180, Tyr289, and Glu371. Asn180 is a binding site for Mg(2+).

It belongs to the transketolase family. DXPS subfamily. In terms of assembly, homodimer. Mg(2+) is required as a cofactor. Thiamine diphosphate serves as cofactor.

It catalyses the reaction D-glyceraldehyde 3-phosphate + pyruvate + H(+) = 1-deoxy-D-xylulose 5-phosphate + CO2. It functions in the pathway metabolic intermediate biosynthesis; 1-deoxy-D-xylulose 5-phosphate biosynthesis; 1-deoxy-D-xylulose 5-phosphate from D-glyceraldehyde 3-phosphate and pyruvate: step 1/1. Its function is as follows. Catalyzes the acyloin condensation reaction between C atoms 2 and 3 of pyruvate and glyceraldehyde 3-phosphate to yield 1-deoxy-D-xylulose-5-phosphate (DXP). The chain is 1-deoxy-D-xylulose-5-phosphate synthase from Bartonella tribocorum (strain CIP 105476 / IBS 506).